A 740-amino-acid chain; its full sequence is ATP-dependent RNA helicase DBP7 (740 aa).

The segment at 1-104 (MSFNDDDDGM…SNVEQPARVT (104 aa)) is disordered. Residues 13–25 (NFTTDVSDASETV) show a composition bias toward polar residues. Positions 43 to 60 (MMMEGRKPRVRGEKRPLE) are enriched in basic and acidic residues. The segment covering 72-81 (ASSSNSTSAQ) has biased composition (polar residues). The short motif at 149 to 178 (DTFDSFGITDTMVSHLNVKMKISKPTKIQK) is the Q motif element. The region spanning 182–376 (PPFLQAQNDL…NVTLQNYKLI (195 aa)) is the Helicase ATP-binding domain. ATP is bound at residue 195–202 (AQTGSGKT). A DEAD box motif is present at residues 311–314 (DEGD). Residues 414–607 (TITQKHYKEG…VLRPAFEGLN (194 aa)) enclose the Helicase C-terminal domain. A disordered region spans residues 695–721 (SMGLQQGKAGAAAAASQKKPKEDSKSK). Positions 697 to 711 (GLQQGKAGAAAAASQ) are enriched in low complexity.

This sequence belongs to the DEAD box helicase family. DDX31/DBP7 subfamily.

It is found in the nucleus. The protein localises to the nucleolus. It catalyses the reaction ATP + H2O = ADP + phosphate + H(+). Its function is as follows. ATP-binding RNA helicase involved in the biogenesis of 60S ribosomal subunits and is required for the normal formation of 25S and 5.8S rRNAs. The sequence is that of ATP-dependent RNA helicase DBP7 (DBP7) from Kluyveromyces lactis (strain ATCC 8585 / CBS 2359 / DSM 70799 / NBRC 1267 / NRRL Y-1140 / WM37) (Yeast).